The chain runs to 88 residues: Large ribosomal subunit protein bL27 (88 aa).

Residues 1–25 (MAHKKGASSSRNGRDSNAQRLGVKR) are disordered. Residues 7–19 (ASSSRNGRDSNAQ) are compositionally biased toward polar residues.

Belongs to the bacterial ribosomal protein bL27 family.

The chain is Large ribosomal subunit protein bL27 from Nocardia farcinica (strain IFM 10152).